Here is a 125-residue protein sequence, read N- to C-terminus: Histone H2A (125 aa).

A compositionally biased stretch (basic residues) spans 1-18 (MSGRGKGGKAKAKAKSRS). Residues 1–21 (MSGRGKGGKAKAKAKSRSSRA) form a disordered region. Position 2 is an N-acetylserine (S2). At Q104 the chain carries N5-methylglutamine.

The protein belongs to the histone H2A family. As to quaternary structure, the nucleosome is a histone octamer containing two molecules each of H2A, H2B, H3 and H4 assembled in one H3-H4 heterotetramer and two H2A-H2B heterodimers. The octamer wraps approximately 147 bp of DNA.

The protein resides in the nucleus. It localises to the chromosome. In terms of biological role, core component of nucleosome. Nucleosomes wrap and compact DNA into chromatin, limiting DNA accessibility to the cellular machineries which require DNA as a template. Histones thereby play a central role in transcription regulation, DNA repair, DNA replication and chromosomal stability. DNA accessibility is regulated via a complex set of post-translational modifications of histones, also called histone code, and nucleosome remodeling. This Mytilus californianus (California mussel) protein is Histone H2A.